A 476-amino-acid chain; its full sequence is MADKLDIKAFLDKDEQKDLLRLLTAGSVDDGKSTLIGRLLFDSKKLYEDQLDALERDSKRLGNAGEHIDYALLLDGLKAEREQGITIDVAYRYFSTNNRKFIIADTPGHEQYTRNMITGGSTANLAIILVDARMGVITQTRRHTFLVSLLGIKHVVLAVNKMDLVDFSEERFNEIVAEYKKFVAPLGIPDVTCIPLSALDGDNVVDKSERTPWYEGLSLLDFLETVHIDSDNNFSDFRFPVQYVLRPNLDFRGFCGKVASGIIRKGDKVMALPSGKVSHVKSIVTFDGELDYAFPPQSVTLTLEDEIDVSRGEMLVHPDNLPIVDRNFEAMLVWMDEEPMDINKSFFIKQTTNVSRTRIDSIKYKVDVNTMEHSSVPFLSLNEIARVVFTTAKELFFDPYRKNKSCGSFILIDPITNNTSAVGMIIDRVEKKDMNIADDFPVLNLPELGIAPEHYEAIEKAVKSLSEQGFEVRIEK.

Residues 17–232 (KDLLRLLTAG…LETVHIDSDN (216 aa)) form the tr-type G domain. The interval 26 to 33 (GSVDDGKS) is G1. 26–33 (GSVDDGKS) is a binding site for GTP. Positions 84–88 (GITID) are G2. The interval 105–108 (DTPG) is G3. Residues 105-109 (DTPGH) and 160-163 (NKMD) each bind GTP. Positions 160 to 163 (NKMD) are G4. A G5 region spans residues 197 to 199 (SAL).

Belongs to the TRAFAC class translation factor GTPase superfamily. Classic translation factor GTPase family. CysN/NodQ subfamily. Heterodimer composed of CysD, the smaller subunit, and CysN.

It carries out the reaction sulfate + ATP + H(+) = adenosine 5'-phosphosulfate + diphosphate. It participates in sulfur metabolism; hydrogen sulfide biosynthesis; sulfite from sulfate: step 1/3. Its function is as follows. With CysD forms the ATP sulfurylase (ATPS) that catalyzes the adenylation of sulfate producing adenosine 5'-phosphosulfate (APS) and diphosphate, the first enzymatic step in sulfur assimilation pathway. APS synthesis involves the formation of a high-energy phosphoric-sulfuric acid anhydride bond driven by GTP hydrolysis by CysN coupled to ATP hydrolysis by CysD. In Bacteroides fragilis (strain YCH46), this protein is Sulfate adenylyltransferase subunit 1.